The sequence spans 700 residues: Elongation factor G (700 aa).

One can recognise a tr-type G domain in the interval 10-286 (SKVRNIGIMA…AVIDYLPSPL (277 aa)). Residues 19–26 (AHIDAGKT), 83–87 (DTPGH), and 137–140 (NKMD) contribute to the GTP site.

It belongs to the TRAFAC class translation factor GTPase superfamily. Classic translation factor GTPase family. EF-G/EF-2 subfamily.

Its subcellular location is the cytoplasm. In terms of biological role, catalyzes the GTP-dependent ribosomal translocation step during translation elongation. During this step, the ribosome changes from the pre-translocational (PRE) to the post-translocational (POST) state as the newly formed A-site-bound peptidyl-tRNA and P-site-bound deacylated tRNA move to the P and E sites, respectively. Catalyzes the coordinated movement of the two tRNA molecules, the mRNA and conformational changes in the ribosome. This Mycolicibacterium gilvum (strain PYR-GCK) (Mycobacterium gilvum (strain PYR-GCK)) protein is Elongation factor G.